We begin with the raw amino-acid sequence, 332 residues long: Glycerol-3-phosphate dehydrogenase [NAD(P)+] (332 aa).

NADPH contacts are provided by Trp-13, Arg-33, and Lys-107. Sn-glycerol 3-phosphate contacts are provided by Lys-107, Gly-136, and Ser-138. Ala-140 is an NADPH binding site. The sn-glycerol 3-phosphate site is built by Lys-191, Asp-244, Ser-254, Arg-255, and Asn-256. Lys-191 functions as the Proton acceptor in the catalytic mechanism. An NADPH-binding site is contributed by Arg-255. Glu-280 contributes to the NADPH binding site.

Belongs to the NAD-dependent glycerol-3-phosphate dehydrogenase family.

Its subcellular location is the cytoplasm. The catalysed reaction is sn-glycerol 3-phosphate + NAD(+) = dihydroxyacetone phosphate + NADH + H(+). It carries out the reaction sn-glycerol 3-phosphate + NADP(+) = dihydroxyacetone phosphate + NADPH + H(+). The protein operates within membrane lipid metabolism; glycerophospholipid metabolism. In terms of biological role, catalyzes the reduction of the glycolytic intermediate dihydroxyacetone phosphate (DHAP) to sn-glycerol 3-phosphate (G3P), the key precursor for phospholipid synthesis. In Alkalilimnicola ehrlichii (strain ATCC BAA-1101 / DSM 17681 / MLHE-1), this protein is Glycerol-3-phosphate dehydrogenase [NAD(P)+].